The chain runs to 214 residues: Chalcone isomerase-like protein 1 (214 aa).

The protein belongs to the chalcone isomerase family. As to expression, mostly expressed in glandular trichomes (lupulin glands), and, to a lower extent, in cones, cones bracts, leaves, stems and roots.

The protein localises to the cytoplasm. It carries out the reaction a chalcone = a flavanone.. It functions in the pathway secondary metabolite biosynthesis; flavonoid biosynthesis. Functionally, involved in the biosynthesis of prenylated phenolics natural products which contribute to the bitter taste of beer and display broad biological activities. Involved in anthocyanin biosynthesis. Polyketide binding proteins (PBP) which reduces the catalytic activities of CHS_H1 and PT1L and prevents demethylxanthohumol (DMX) production, by binding to DMX and naringenin chalcone (NC) to stabilize the chalconoids ring-opened structure. This chain is Chalcone isomerase-like protein 1, found in Humulus lupulus (European hop).